The sequence spans 1337 residues: Sister chromatid cohesion protein PDS5 homolog A (1337 aa).

Position 1 is an N-acetylmethionine (methionine 1). An HEAT repeat occupies 393 to 429 (ALVNDQLLGFVRERTLDKRWRVRKEAMMGLAQLYKKY). Serine 1097 is modified (phosphoserine). N6-acetyllysine is present on lysine 1146. The interval 1150 to 1337 (ATGRKPYVRS…PAERQIDLQR (188 aa)) is disordered. The segment covering 1159–1180 (STGTETGSNINVNSELNPSTGN) has biased composition (polar residues). At serine 1195 the chain carries Phosphoserine. Threonine 1208 is modified (phosphothreonine). N6-acetyllysine is present on lysine 1211. Polar residues predominate over residues 1223–1233 (SDQATQGNISS). Lysine 1290 carries the post-translational modification N6-acetyllysine. Serine 1305 is modified (phosphoserine). A compositionally biased stretch (basic and acidic residues) spans 1321–1337 (DLAKKAAPAERQIDLQR).

Belongs to the PDS5 family. As to quaternary structure, interacts with the cohesin complex. Interacts with WAPL (via FGF motifs) or CDCA5 (via the FGF motif); the interaction is direct, cohesin-dependent and competitive. Interacts with SMC3. Interacts with TP63. In terms of tissue distribution, highest level in colon. Low levels in lung, ovary, breast and kidney. Reduced level in renal tumor tissue. Isoform 2 is expressed in kidney.

It is found in the nucleus. Its function is as follows. Probable regulator of sister chromatid cohesion in mitosis which may stabilize cohesin complex association with chromatin. May couple sister chromatid cohesion during mitosis to DNA replication. Cohesion ensures that chromosome partitioning is accurate in both meiotic and mitotic cells and plays an important role in DNA repair. The chain is Sister chromatid cohesion protein PDS5 homolog A from Homo sapiens (Human).